Here is a 290-residue protein sequence, read N- to C-terminus: Phosphoribulokinase (290 aa).

12–20 (GSSGAGTTS) serves as a coordination point for ATP.

The protein belongs to the phosphoribulokinase family.

The catalysed reaction is D-ribulose 5-phosphate + ATP = D-ribulose 1,5-bisphosphate + ADP + H(+). It participates in carbohydrate biosynthesis; Calvin cycle. The protein is Phosphoribulokinase (cbbP) of Nitrobacter vulgaris.